Consider the following 184-residue polypeptide: Elongation factor P (184 aa).

This sequence belongs to the elongation factor P family.

The protein localises to the cytoplasm. It participates in protein biosynthesis; polypeptide chain elongation. Its function is as follows. Involved in peptide bond synthesis. Stimulates efficient translation and peptide-bond synthesis on native or reconstituted 70S ribosomes in vitro. Probably functions indirectly by altering the affinity of the ribosome for aminoacyl-tRNA, thus increasing their reactivity as acceptors for peptidyl transferase. This Paracidovorax citrulli (strain AAC00-1) (Acidovorax citrulli) protein is Elongation factor P.